A 372-amino-acid chain; its full sequence is MEKNRSAFQQNQQASNQPFNQDQNQYYQDPNQQQFNQSGFDPNQQQFNQPGFDPNQQYYQDPNQQQFNQAGFDQNQQYYQDPNQQQFNQPGFDPNQQYYQDPNQQQFNQAGFDQNQYYQDPNQQQFNQSGFDQNQYYQDPNQQQFNQPSFDLNNQQFNQPGFNQSPAFEITPQEQKAEQEMFGEEPPQVVREIHELPFEKIRSFLQSDFDSYNFRLNSLKSKLDNALYSLDKTIQNTNENTANLEAIRHNLEQKIQNQSKQLRTNFDTQKLDDKINELEIRMQKLTRNFESLSELSKHNSYPNYYEKLLPNGGDSMTNVFEKALMMNLLRTTLPPQPQVQYYPQPYPYIRPYYDEPIYAGFRRRGYRDDFYE.

Positions 1–37 are enriched in low complexity; the sequence is MEKNRSAFQQNQQASNQPFNQDQNQYYQDPNQQQFNQ. The tract at residues 1 to 100 is disordered; sequence MEKNRSAFQQ…GFDPNQQYYQ (100 aa). 13 tandem repeats follow at residues 29–40, 41–52, 53–60, 61–72, 73–80, 81–92, 93–100, 101–112, 113–119, 120–131, 132–138, 139–150, and 151–162. Over residues 38-49 the composition is skewed to polar residues; sequence SGFDPNQQQFNQ. The span at 53 to 100 shows a compositional bias: low complexity; that stretch reads DPNQQYYQDPNQQQFNQAGFDQNQQYYQDPNQQQFNQPGFDPNQQYYQ. The segment at 122–150 is disordered; sequence NQQQFNQSGFDQNQYYQDPNQQQFNQPSF.

The protein is Proline-rich P65 protein homolog of Mycoplasma genitalium (strain ATCC 33530 / DSM 19775 / NCTC 10195 / G37) (Mycoplasmoides genitalium).